The primary structure comprises 1293 residues: MEIIRGAPALSAFRVQKLMEACENAALPVSQIYAEYVHLASLSEPLDDNERLQLETILTYGPAIESHAPQGTLLFVTPRPGTISPWSSKATDIAHNCGLGKVSRLERGIAYYVEASVLTAEQQKLLQGLLHDRMVEVMLPAFEAAEVLFARTEPAKFSSVNILAEGRRALEVANIKLGLALADDEIDYLIENFVRLKRNPNDIELMMFAQANSEHCRHKIFNADWTIDGEVQLKSLFKMIKNTFEVTPDYVLSAYKDNAAVMTGSVAGRFFPDPDGIYNYHTEPMHILMKVETHNHPTAISPYPGAATGSGGEIRDEGATGRGSKPKAGLSGFTVSNLKIPGFVQPWEGDYGKPDRIVTPLEIMLEGPLGGAAFNNEFGRPAITGYFRTYEQLVSSHNGVEVRGYHKPIMIAGGLGNIREDHVQKGEITIGAKLIVLGGPAMNIGLGGGAASSMASGQSSEDLDFASVQRENPEMERRCQEVIDRCWQLGDTNPIQFIHDVGAGGLSNAFPELVNDADRGGVFNLRNVPSDEPGMSPLEIWCNESQERYVLSVAPENLQQFADICARERAPFAVVGEATAEMHLTLADSHFNNKPIDLPLEVLLGKAPKMSRDVVTAKAVSPALDQTKIELKDAVKRILTLPTVADKTFLITIGDRSVTGLVNRDQMVGPWQVPVADCAVTASSYDSYCGEAMSMGERTPLALLDFDASARMAVAESIMNIAGTDIGSFKRIKLSANWMSPAGHPGEDAGLYQAVKAIGEDLCPELGITIPVGKDSMSMKTAWEDNGTQKTVTSPMSLVITAFGVVQDIRKTVTPQLRSDKGDSALLMLDLSNGQNRLGGSCLAQVYSELGDIAPTLDKTANLAGFFEVMQQLVADQAVMAYHDRSDGGLFTTLVEMAFAGNTGLTIDLASLSGTDLERLFNEEIGAVIQVSAIDAKAIAAQFEAKGVTCHHIGGLQTADKISINDGERVIFADSRTALRTLWSETTYRMQALRDNPECAREEYELKQQADAPGLTVKLGFNPSEDVAAPYILKGVAPKMAILREQGVNSHVEMAAAFDRAGFESRDVHMSDILSGRISLEEFQGLVACGGFSYGDVLGAGEGWAKSILFNDRARDEFSRFFERDSSIALGVCNGCQMLSNLKEIIPGSEHWPRFVRNRSERFEARFSLVEVQQNPSVFFEGMVGSRMPIAVSHGEGLVEFANAQALANAEASGTIALRYVDGHGQIATQYPENPNGSANGLTGICTTDGRVTIMMPHPERVFRTVANSWHPDNWGEDSPWMRMFRNARVKIG.

Residues 305 to 316 (GAATGSGGEIRD), 384 to 386 (TGY), and A676 contribute to the ATP site. The tract at residues 307 to 326 (ATGSGGEIRDEGATGRGSKP) is disordered. Mg(2+) is bound by residues D677, E716, N720, and D884. S886 provides a ligand contact to ATP. Positions 1040–1293 (MAILREQGVN…MFRNARVKIG (254 aa)) constitute a Glutamine amidotransferase type-1 domain. The active-site Nucleophile is the C1133. Active-site residues include H1258 and E1260.

In the N-terminal section; belongs to the FGAMS family. As to quaternary structure, monomer.

The protein resides in the cytoplasm. It catalyses the reaction N(2)-formyl-N(1)-(5-phospho-beta-D-ribosyl)glycinamide + L-glutamine + ATP + H2O = 2-formamido-N(1)-(5-O-phospho-beta-D-ribosyl)acetamidine + L-glutamate + ADP + phosphate + H(+). The protein operates within purine metabolism; IMP biosynthesis via de novo pathway; 5-amino-1-(5-phospho-D-ribosyl)imidazole from N(2)-formyl-N(1)-(5-phospho-D-ribosyl)glycinamide: step 1/2. Its function is as follows. Phosphoribosylformylglycinamidine synthase involved in the purines biosynthetic pathway. Catalyzes the ATP-dependent conversion of formylglycinamide ribonucleotide (FGAR) and glutamine to yield formylglycinamidine ribonucleotide (FGAM) and glutamate. In Shewanella frigidimarina (strain NCIMB 400), this protein is Phosphoribosylformylglycinamidine synthase.